Consider the following 688-residue polypeptide: Glycine--tRNA ligase beta subunit (688 aa).

It belongs to the class-II aminoacyl-tRNA synthetase family. In terms of assembly, tetramer of two alpha and two beta subunits.

It is found in the cytoplasm. The catalysed reaction is tRNA(Gly) + glycine + ATP = glycyl-tRNA(Gly) + AMP + diphosphate. The sequence is that of Glycine--tRNA ligase beta subunit from Listeria monocytogenes serotype 4b (strain CLIP80459).